Consider the following 239-residue polypeptide: Ribonuclease PH (239 aa).

Phosphate-binding positions include R87 and 125 to 127 (GTR).

This sequence belongs to the RNase PH family. As to quaternary structure, homohexameric ring arranged as a trimer of dimers.

It catalyses the reaction tRNA(n+1) + phosphate = tRNA(n) + a ribonucleoside 5'-diphosphate. Functionally, phosphorolytic 3'-5' exoribonuclease that plays an important role in tRNA 3'-end maturation. Removes nucleotide residues following the 3'-CCA terminus of tRNAs; can also add nucleotides to the ends of RNA molecules by using nucleoside diphosphates as substrates, but this may not be physiologically important. Probably plays a role in initiation of 16S rRNA degradation (leading to ribosome degradation) during starvation. The sequence is that of Ribonuclease PH from Azotobacter vinelandii (strain DJ / ATCC BAA-1303).